Reading from the N-terminus, the 172-residue chain is Shikimate kinase (172 aa).

ATP is bound at residue 11–16; it reads GSGKTT. Threonine 15 contributes to the Mg(2+) binding site. Positions 33, 57, and 79 each coordinate substrate. An ATP-binding site is contributed by arginine 117. Residue arginine 136 coordinates substrate.

It belongs to the shikimate kinase family. As to quaternary structure, monomer. Mg(2+) serves as cofactor.

It is found in the cytoplasm. The catalysed reaction is shikimate + ATP = 3-phosphoshikimate + ADP + H(+). It functions in the pathway metabolic intermediate biosynthesis; chorismate biosynthesis; chorismate from D-erythrose 4-phosphate and phosphoenolpyruvate: step 5/7. In terms of biological role, catalyzes the specific phosphorylation of the 3-hydroxyl group of shikimic acid using ATP as a cosubstrate. In Caldicellulosiruptor bescii (strain ATCC BAA-1888 / DSM 6725 / KCTC 15123 / Z-1320) (Anaerocellum thermophilum), this protein is Shikimate kinase.